A 441-amino-acid polypeptide reads, in one-letter code: tRNA modification GTPase MnmE (441 aa).

Residues Arg23, Glu81, and Lys121 each coordinate (6S)-5-formyl-5,6,7,8-tetrahydrofolate. In terms of domain architecture, TrmE-type G spans 218 to 363; that stretch reads GFRVAIVGPP…LESWIAAFVS (146 aa). K(+) is bound at residue Asn228. GTP-binding positions include 228–233, 247–253, 272–275, and 326–329; these read NAGKSS, TDIAGTT, DTAG, and NKAD. Ser232 contributes to the Mg(2+) binding site. Residues Thr247, Ile249, and Thr252 each contribute to the K(+) site. Thr253 provides a ligand contact to Mg(2+). Lys441 contacts (6S)-5-formyl-5,6,7,8-tetrahydrofolate.

Belongs to the TRAFAC class TrmE-Era-EngA-EngB-Septin-like GTPase superfamily. TrmE GTPase family. As to quaternary structure, homodimer. Heterotetramer of two MnmE and two MnmG subunits. K(+) is required as a cofactor.

The protein localises to the cytoplasm. In terms of biological role, exhibits a very high intrinsic GTPase hydrolysis rate. Involved in the addition of a carboxymethylaminomethyl (cmnm) group at the wobble position (U34) of certain tRNAs, forming tRNA-cmnm(5)s(2)U34. This is tRNA modification GTPase MnmE from Hyphomonas neptunium (strain ATCC 15444).